The sequence spans 750 residues: Ribosomal RNA large subunit methyltransferase K/L (750 aa).

One can recognise a THUMP domain in the interval 46 to 157 (TAYRLCLWSR…RGEAILSLDL (112 aa)).

It belongs to the methyltransferase superfamily. RlmKL family.

It localises to the cytoplasm. It carries out the reaction guanosine(2445) in 23S rRNA + S-adenosyl-L-methionine = N(2)-methylguanosine(2445) in 23S rRNA + S-adenosyl-L-homocysteine + H(+). The enzyme catalyses guanosine(2069) in 23S rRNA + S-adenosyl-L-methionine = N(2)-methylguanosine(2069) in 23S rRNA + S-adenosyl-L-homocysteine + H(+). Specifically methylates the guanine in position 2445 (m2G2445) and the guanine in position 2069 (m7G2069) of 23S rRNA. This is Ribosomal RNA large subunit methyltransferase K/L from Pseudomonas syringae pv. tomato (strain ATCC BAA-871 / DC3000).